The following is a 956-amino-acid chain: Translation initiation factor IF-2 (956 aa).

Disordered stretches follow at residues 53–102, 116–315, and 334–371; these read QFAG…QQEI, GKID…NRPA, and TLEK…ALDE. A compositionally biased stretch (basic and acidic residues) spans 58–102; it reads KGNKEASKEVGEEKRKEKEALRVEREKEIEDKRRQEEERQKQQEI. Residues 142–158 show a composition bias toward polar residues; that stretch reads VTPTQTEKPVQKETVQS. Positions 166-186 are enriched in basic and acidic residues; it reads SEEKKVEKPIITEKKEVKAES. Residues 197–208 show a composition bias toward low complexity; it reads TDPTTAEETITT. Over residues 209–229 the composition is skewed to polar residues; that stretch reads QYQKLSGTTLTGQTIDLSQFN. Residues 240 to 257 show a composition bias toward low complexity; it reads ITPNKPGTPGVGNNNNAN. Residues 343–352 show a composition bias toward basic residues; that stretch reads GKSKAAKYRR. Basic and acidic residues predominate over residues 353-371; sequence DKRETHRQKSDDEQRALDE. The region spanning 454–622 is the tr-type G domain; the sequence is TRAPIVTVMG…KVLLEAEILD (169 aa). The interval 463 to 470 is G1; that stretch reads GHVDHGKT. Residue 463–470 coordinates GTP; that stretch reads GHVDHGKT. The segment at 488 to 492 is G2; the sequence is GITQH. Residues 510 to 513 are G3; it reads DTPG. GTP contacts are provided by residues 510-514 and 564-567; these read DTPGH and NKVD. Residues 564-567 are G4; that stretch reads NKVD. Positions 600–602 are G5; that stretch reads SAK.

Belongs to the TRAFAC class translation factor GTPase superfamily. Classic translation factor GTPase family. IF-2 subfamily.

It localises to the cytoplasm. Functionally, one of the essential components for the initiation of protein synthesis. Protects formylmethionyl-tRNA from spontaneous hydrolysis and promotes its binding to the 30S ribosomal subunits. Also involved in the hydrolysis of GTP during the formation of the 70S ribosomal complex. This Flavobacterium johnsoniae (strain ATCC 17061 / DSM 2064 / JCM 8514 / BCRC 14874 / CCUG 350202 / NBRC 14942 / NCIMB 11054 / UW101) (Cytophaga johnsonae) protein is Translation initiation factor IF-2.